A 139-amino-acid chain; its full sequence is S-adenosylmethionine decarboxylase proenzyme (139 aa).

Serine 63 (schiff-base intermediate with substrate; via pyruvic acid) is an active-site residue. Serine 63 carries the post-translational modification Pyruvic acid (Ser); by autocatalysis. Histidine 68 (proton acceptor; for processing activity) is an active-site residue. Cysteine 83 serves as the catalytic Proton donor; for catalytic activity.

Belongs to the prokaryotic AdoMetDC family. Type 1 subfamily. As to quaternary structure, heterotetramer of two alpha and two beta chains arranged as a dimer of alpha/beta heterodimers. Pyruvate serves as cofactor. Is synthesized initially as an inactive proenzyme. Formation of the active enzyme involves a self-maturation process in which the active site pyruvoyl group is generated from an internal serine residue via an autocatalytic post-translational modification. Two non-identical subunits are generated from the proenzyme in this reaction, and the pyruvate is formed at the N-terminus of the alpha chain, which is derived from the carboxyl end of the proenzyme. The post-translation cleavage follows an unusual pathway, termed non-hydrolytic serinolysis, in which the side chain hydroxyl group of the serine supplies its oxygen atom to form the C-terminus of the beta chain, while the remainder of the serine residue undergoes an oxidative deamination to produce ammonia and the pyruvoyl group blocking the N-terminus of the alpha chain.

It carries out the reaction S-adenosyl-L-methionine + H(+) = S-adenosyl 3-(methylsulfanyl)propylamine + CO2. It participates in amine and polyamine biosynthesis; S-adenosylmethioninamine biosynthesis; S-adenosylmethioninamine from S-adenosyl-L-methionine: step 1/1. In terms of biological role, catalyzes the decarboxylation of S-adenosylmethionine to S-adenosylmethioninamine (dcAdoMet), the propylamine donor required for the synthesis of the polyamines spermine and spermidine from the diamine putrescine. This Pyrococcus furiosus (strain ATCC 43587 / DSM 3638 / JCM 8422 / Vc1) protein is S-adenosylmethionine decarboxylase proenzyme.